Here is a 567-residue protein sequence, read N- to C-terminus: Urease subunit alpha (567 aa).

A Urease domain is found at 129–567 (GGVDTHIHWI…LPMAQRYFLF (439 aa)). Ni(2+) is bound by residues H134, H136, and K217. K217 is modified (N6-carboxylysine). H219 contributes to the substrate binding site. Ni(2+) is bound by residues H246 and H272. The Proton donor role is filled by H320. Residue D360 participates in Ni(2+) binding.

The protein belongs to the metallo-dependent hydrolases superfamily. Urease alpha subunit family. In terms of assembly, heterotrimer of UreA (gamma), UreB (beta) and UreC (alpha) subunits. Three heterotrimers associate to form the active enzyme. Ni cation is required as a cofactor. Post-translationally, carboxylation allows a single lysine to coordinate two nickel ions.

The protein resides in the cytoplasm. It carries out the reaction urea + 2 H2O + H(+) = hydrogencarbonate + 2 NH4(+). It functions in the pathway nitrogen metabolism; urea degradation; CO(2) and NH(3) from urea (urease route): step 1/1. The polypeptide is Urease subunit alpha (Escherichia coli O157:H7).